A 609-amino-acid polypeptide reads, in one-letter code: Rhotekin-2 (609 aa).

Positions 5-81 (SLRGPALRLA…LQKLEEQIAN (77 aa)) constitute an REM-1 domain. Positions 56 to 91 (KNLMVCNARLMAYTSELQKLEEQIANQTGRCDVKFE) form a coiled coil. A PH domain is found at 286-393 (EDAFAGFLNQ…WMEAFWQHFF (108 aa)). Disordered stretches follow at residues 495–520 (HDEK…KSQS) and 554–609 (KPMA…QAQV). Positions 569 to 582 (RLSDGEHTDTKTNF) are enriched in basic and acidic residues.

As to expression, expressed in lymphocytes, CD4 positive T-cells and bone marrow-derived cells. Also expressed in lung, colon, thymus and brain.

In terms of biological role, may play an important role in lymphopoiesis. The sequence is that of Rhotekin-2 (RTKN2) from Homo sapiens (Human).